Consider the following 501-residue polypeptide: Membrane-bound lytic murein transglycosylase F (501 aa).

The signal sequence occupies residues 1–29 (MTKILLNTASTVLTRLWKLSLLGLVFAVA). The tract at residues 30–274 (AATLVSSRIP…DAMETFYGHL (245 aa)) is non-LT domain. Residues 275–501 (GEIDYSGAIL…VKSISGTSSL (227 aa)) form an LT domain region. The active site involves E321.

The protein in the N-terminal section; belongs to the bacterial solute-binding protein 3 family. In the C-terminal section; belongs to the transglycosylase Slt family.

It localises to the cell outer membrane. It catalyses the reaction Exolytic cleavage of the (1-&gt;4)-beta-glycosidic linkage between N-acetylmuramic acid (MurNAc) and N-acetylglucosamine (GlcNAc) residues in peptidoglycan, from either the reducing or the non-reducing ends of the peptidoglycan chains, with concomitant formation of a 1,6-anhydrobond in the MurNAc residue.. Murein-degrading enzyme that degrades murein glycan strands and insoluble, high-molecular weight murein sacculi, with the concomitant formation of a 1,6-anhydromuramoyl product. Lytic transglycosylases (LTs) play an integral role in the metabolism of the peptidoglycan (PG) sacculus. Their lytic action creates space within the PG sacculus to allow for its expansion as well as for the insertion of various structures such as secretion systems and flagella. This is Membrane-bound lytic murein transglycosylase F from Saccharophagus degradans (strain 2-40 / ATCC 43961 / DSM 17024).